Reading from the N-terminus, the 287-residue chain is MHRASHHELRAMFRALLDSSRCYHTASVFDPMSARIAADLGFECGILGGSVASLQVLAAPDFALITLSEFVEQATRIGRVARLPVIADADHGYGNALNVMRTVVELERAGIAALTIEDTLLPAQFGRKSTDLICVEEGVGKIRAALEARVDPALTIIARTNAELIDVDAVIQRTLAYQEAGADGICLVGVRDFAHLEAIAEHLHIPLMLVTYGNPQLRDDARLARLGVRIVVNGHAAYFAAIKATYDCLREERGAVASDLTASELSKKYTFPEEYQAWARDYMEVKE.

Serine 50 contacts substrate. Aspartate 88 is a binding site for Mg(2+). Residues arginine 159 and histidine 235 each coordinate substrate.

It belongs to the isocitrate lyase/PEP mutase superfamily. Oxaloacetate decarboxylase family. Homotetramer; dimer of dimers. The cofactor is Mg(2+).

The enzyme catalyses oxaloacetate + H(+) = pyruvate + CO2. Functionally, catalyzes the decarboxylation of oxaloacetate into pyruvate. Seems to play a role in maintaining cellular concentrations of bicarbonate and pyruvate. The sequence is that of Oxaloacetate decarboxylase from Pseudomonas paraeruginosa (strain DSM 24068 / PA7) (Pseudomonas aeruginosa (strain PA7)).